We begin with the raw amino-acid sequence, 199 residues long: Charged multivesicular body protein 1b (199 aa).

2 coiled-coil regions span residues 8 to 42 and 178 to 199; these read LFNLKFAAKELNRNAKKCEKEEKTEKAKIKKAIQK and TSVASTEQDELSQRLARLRDQV. The disordered stretch occupies residues 167–199; sequence ELPQGQTGSVGTSVASTEQDELSQRLARLRDQV. The span at 170-183 shows a compositional bias: polar residues; sequence QGQTGSVGTSVAST. Positions 186-196 match the MIT-interacting motif motif; that stretch reads DELSQRLARLR.

The protein belongs to the SNF7 family. Probable peripherally associated component of the endosomal sorting required for transport complex III (ESCRT-III).

Its subcellular location is the cytoplasm. The protein resides in the cytosol. It is found in the endosome. The protein localises to the late endosome membrane. In terms of biological role, probable peripherally associated component of the endosomal sorting required for transport complex III (ESCRT-III) which is involved in multivesicular bodies (MVBs) formation and sorting of endosomal cargo proteins into MVBs. MVBs contain intraluminal vesicles (ILVs) that are generated by invagination and scission from the limiting membrane of the endosome and mostly are delivered to lysosomes enabling degradation of membrane proteins, such as stimulated growth factor receptors, lysosomal enzymes and lipids. This Xenopus laevis (African clawed frog) protein is Charged multivesicular body protein 1b (chmp1b).